Here is a 246-residue protein sequence, read N- to C-terminus: 1-(5-phosphoribosyl)-5-[(5-phosphoribosylamino)methylideneamino] imidazole-4-carboxamide isomerase (246 aa).

The Proton acceptor role is filled by Asp8. Asp131 (proton donor) is an active-site residue.

It belongs to the HisA/HisF family.

It localises to the cytoplasm. It carries out the reaction 1-(5-phospho-beta-D-ribosyl)-5-[(5-phospho-beta-D-ribosylamino)methylideneamino]imidazole-4-carboxamide = 5-[(5-phospho-1-deoxy-D-ribulos-1-ylimino)methylamino]-1-(5-phospho-beta-D-ribosyl)imidazole-4-carboxamide. The protein operates within amino-acid biosynthesis; L-histidine biosynthesis; L-histidine from 5-phospho-alpha-D-ribose 1-diphosphate: step 4/9. This chain is 1-(5-phosphoribosyl)-5-[(5-phosphoribosylamino)methylideneamino] imidazole-4-carboxamide isomerase, found in Bordetella avium (strain 197N).